The chain runs to 540 residues: Homoserine O-acetyltransferase (540 aa).

The region spanning 66 to 404 (NVILICHALT…QHGHDAFLLE (339 aa)) is the AB hydrolase-1 domain. The active-site Nucleophile is the Ser171. Residue Arg240 participates in substrate binding. The tract at residues 262–284 (QDTDKSGIKGTTGTEGKNSSEIS) is disordered. Active-site residues include Asp365 and His398. Asp399 lines the substrate pocket. CBS domains follow at residues 425-484 (MNRN…ELDE) and 486-540 (ITRD…GKYD).

The protein belongs to the AB hydrolase superfamily. MetX family. In terms of assembly, homodimer.

Its subcellular location is the cytoplasm. It catalyses the reaction L-homoserine + acetyl-CoA = O-acetyl-L-homoserine + CoA. The protein operates within amino-acid biosynthesis; L-methionine biosynthesis via de novo pathway; O-acetyl-L-homoserine from L-homoserine: step 1/1. Transfers an acetyl group from acetyl-CoA to L-homoserine, forming acetyl-L-homoserine. In vitro, can also use propionyl-CoA or butiryl-CoA as acyl donor. This Methanosarcina acetivorans (strain ATCC 35395 / DSM 2834 / JCM 12185 / C2A) protein is Homoserine O-acetyltransferase.